Consider the following 650-residue polypeptide: MSTSLLKLTGITRRFTNGEQDVTVLKDINLTINQGEMVAIVGASGSGKSTLMNILGCLDKPSAGDYQVAGRAVGKLDNDQLAELRREHFGFIFQRYHLLGDLTALGNVEVPAIYAGKSRLARRQRAADLLTRLGLENRLHYRPSQLSGGQQQRVSIARALMNAGGIILADEPTGALDTHSGNEVLSILRDLHRQGNTVVIVTHDMTIAEHAQRVIELRDGEVIADRQTRPEEATASSPEAASSPATSALNQFKDRFIDAFKMALLAMNAQRMRTFLTMLGIIIGIASVVSVVALGKGSQEQVLANINSMGTSTLEIFPGKGFGDMDASAIQTLRASDIQPLTQQPYVHSVTPSVSTSVTMRYGNIAVSASISGVGEQFFTVRGYTLERGVLFPRSSVDELTQDAVIDKNTRDKLFPHGEDPIGQVILVGSLPVRIIGVVSKNQGGFGSDENLNVWVPYTTVMKRMVGQSYLKSITVRVKDNVDMSIAEQRITDLLMQRHGTKDFFIMNTDSIRQMIEKTTTTLTLLVSMIALISLLVGGIGVMNIMLVSVTERTREIGVRMAVGARTSDIMQQFLIEAVLVCLFGGIAGVALSLAIGVLFAQLSSNFAMIYSSSSIIAAFLCSSLIGIIFGFFPARRAARMEPIHALERE.

The 239-residue stretch at 6–244 folds into the ABC transporter domain; that stretch reads LKLTGITRRF…ASSPEAASSP (239 aa). Residue 42–49 participates in ATP binding; it reads GASGSGKS. Residues 227-246 are disordered; sequence QTRPEEATASSPEAASSPAT. Over residues 233-246 the composition is skewed to low complexity; the sequence is ATASSPEAASSPAT. 4 consecutive transmembrane segments (helical) span residues 275 to 295, 523 to 543, 580 to 600, and 615 to 635; these read FLTM…VALG, LTLL…IGVM, LVCL…GVLF, and SIIA…FFPA.

It belongs to the ABC transporter superfamily. Macrolide exporter (TC 3.A.1.122) family. In terms of assembly, homodimer. Part of the tripartite efflux system MacAB-TolC, which is composed of an inner membrane transporter, MacB, a periplasmic membrane fusion protein, MacA, and an outer membrane component, TolC. The complex forms a large protein conduit and can translocate molecules across both the inner and outer membranes. Interacts with MacA.

Its subcellular location is the cell inner membrane. In terms of biological role, part of the tripartite efflux system MacAB-TolC. MacB is a non-canonical ABC transporter that contains transmembrane domains (TMD), which form a pore in the inner membrane, and an ATP-binding domain (NBD), which is responsible for energy generation. Confers resistance against macrolides. In Pectobacterium atrosepticum (strain SCRI 1043 / ATCC BAA-672) (Erwinia carotovora subsp. atroseptica), this protein is Macrolide export ATP-binding/permease protein MacB.